The following is a 73-amino-acid chain: Sec-independent protein translocase protein TatA (73 aa).

Residues 1–21 traverse the membrane as a helical segment; the sequence is MGSFSIWHWLIVLVIVMLVFG. Residues 43 to 73 form a disordered region; it reads MKEGDDKAAPAKELRDSTTIDVDAKEKTRQQ.

It belongs to the TatA/E family. As to quaternary structure, the Tat system comprises two distinct complexes: a TatABC complex, containing multiple copies of TatA, TatB and TatC subunits, and a separate TatA complex, containing only TatA subunits. Substrates initially bind to the TatABC complex, which probably triggers association of the separate TatA complex to form the active translocon.

The protein localises to the cell inner membrane. Part of the twin-arginine translocation (Tat) system that transports large folded proteins containing a characteristic twin-arginine motif in their signal peptide across membranes. TatA could form the protein-conducting channel of the Tat system. The polypeptide is Sec-independent protein translocase protein TatA (Cupriavidus pinatubonensis (strain JMP 134 / LMG 1197) (Cupriavidus necator (strain JMP 134))).